We begin with the raw amino-acid sequence, 294 residues long: Filamin-B (294 aa).

Filamin repeat units lie at residues 1–67 (GTRL…KVRV) and 71–163 (GQAG…KAKV). A phosphoserine mark is found at S61 and S157. A Glycyl lysine isopeptide (Lys-Gly) (interchain with G-Cter in ISG15) cross-link involves residue K160. The interval 164–198 (TGQRLVGPGSTNETSSILVESVTRSSTETCYSAIP) is hinge 2. Positions 164 to 294 (TGQRLVGPGS…PGSPFHVTVP (131 aa)) are self-association site, tail. A phosphoserine mark is found at S173 and S184. One copy of the Filamin 24 repeat lies at 199–293 (KASSDASKVT…IPGSPFHVTV (95 aa)). Residues K210 and K216 each carry the N6-succinyllysine modification. K268 carries the post-translational modification N6-acetyllysine.

Belongs to the filamin family. Homodimer. Interacts with FLNA, FLNC, INPPL1, ITGB1A, ITGB1D, ITGB3, ITGB6, MYOT, MYOZ1, PSEN1 and PSEN2. Interacts with MICALL2. Interacts with RFLNA and RFLNB. Interacts with HTLV-I viral p13 protein. Interacts with ASB2; the interaction targets FLNB for proteasomal degradation. ISGylation prevents ability to interact with the upstream activators of the JNK cascade and inhibits IFNA-induced JNK signaling. In terms of processing, ubiquitination by a SCF-like complex containing ASB2 leads to proteasomal degradation which promotes muscle differentiation.

The protein resides in the cytoplasm. It is found in the cell cortex. The protein localises to the cytoskeleton. Its subcellular location is the myofibril. It localises to the sarcomere. The protein resides in the z line. Connects cell membrane constituents to the actin cytoskeleton. May promote orthogonal branching of actin filaments and links actin filaments to membrane glycoproteins. Anchors various transmembrane proteins to the actin cytoskeleton. The sequence is that of Filamin-B (FLNB) from Oryctolagus cuniculus (Rabbit).